Consider the following 151-residue polypeptide: 3-dehydroquinate dehydratase (151 aa).

Catalysis depends on Tyr-26, which acts as the Proton acceptor. Residues Asn-75, His-81, and Asp-88 each coordinate substrate. The Proton donor role is filled by His-101. Residues 102–103 and Arg-112 contribute to the substrate site; that span reads LS.

Belongs to the type-II 3-dehydroquinase family. Homododecamer.

The catalysed reaction is 3-dehydroquinate = 3-dehydroshikimate + H2O. The protein operates within metabolic intermediate biosynthesis; chorismate biosynthesis; chorismate from D-erythrose 4-phosphate and phosphoenolpyruvate: step 3/7. Its function is as follows. Catalyzes a trans-dehydration via an enolate intermediate. The polypeptide is 3-dehydroquinate dehydratase (Shewanella denitrificans (strain OS217 / ATCC BAA-1090 / DSM 15013)).